Reading from the N-terminus, the 204-residue chain is Molybdenum cofactor guanylyltransferase (204 aa).

Residues 10 to 12 (LAG), lysine 23, asparagine 51, aspartate 69, and aspartate 99 each bind GTP. Position 99 (aspartate 99) interacts with Mg(2+).

Belongs to the MobA family. In terms of assembly, monomer. Requires Mg(2+) as cofactor.

It localises to the cytoplasm. The enzyme catalyses Mo-molybdopterin + GTP + H(+) = Mo-molybdopterin guanine dinucleotide + diphosphate. In terms of biological role, transfers a GMP moiety from GTP to Mo-molybdopterin (Mo-MPT) cofactor (Moco or molybdenum cofactor) to form Mo-molybdopterin guanine dinucleotide (Mo-MGD) cofactor. This chain is Molybdenum cofactor guanylyltransferase, found in Shewanella piezotolerans (strain WP3 / JCM 13877).